Consider the following 286-residue polypeptide: Phosphate import ATP-binding protein PstB (286 aa).

A disordered region spans residues 1–27 (MEPKETLRQRWPGRGRTEETGAMKKSD). The span at 15–27 (GRTEETGAMKKSD) shows a compositional bias: basic and acidic residues. The ABC transporter domain maps to 33–281 (MTVEHLNMYY…PDRKETEDYV (249 aa)). Position 65–72 (65–72 (GPSGCGKS)) interacts with ATP.

Belongs to the ABC transporter superfamily. Phosphate importer (TC 3.A.1.7) family. The complex is composed of two ATP-binding proteins (PstB), two transmembrane proteins (PstC and PstA) and a solute-binding protein (PstS).

It localises to the cell membrane. It catalyses the reaction phosphate(out) + ATP + H2O = ADP + 2 phosphate(in) + H(+). Part of the ABC transporter complex PstSACB involved in phosphate import. Responsible for energy coupling to the transport system. The sequence is that of Phosphate import ATP-binding protein PstB from Rubrobacter xylanophilus (strain DSM 9941 / JCM 11954 / NBRC 16129 / PRD-1).